A 673-amino-acid polypeptide reads, in one-letter code: uncharacterized protein (673 aa).

The disordered stretch occupies residues 1–95 (MLNGEKSALG…QSSAIADSIG (95 aa)). Low complexity predominate over residues 13 to 40 (PSNSNSSSKLNAKSPNFIPSSSNIPRSS). The segment covering 42-60 (KTKEHSADRKPHRNSEKKT) has biased composition (basic and acidic residues). The segment at 214 to 273 (CPFCLEEKPVAARMSRCGHVYCFSCLLRFVETPTAAEVKAAETSGTKIVKCGHRSCPICW) adopts an RING-type zinc-finger fold. The segment at 649-673 (SAPSKNSKNKKKKKLVLLSTGAAHR) is disordered.

Its subcellular location is the cytoplasm. It is found in the nucleus. This is an uncharacterized protein from Schizosaccharomyces pombe (strain 972 / ATCC 24843) (Fission yeast).